The chain runs to 237 residues: Glutathione S-transferase L1 (237 aa).

The GST N-terminal domain occupies 29–110 (GTTRLYISYT…YVDSNFDGPS (82 aa)). Residues 39–40 (CP), 67–68 (NR), 81–82 (KV), and 94–95 (ES) each bind glutathione. The GST C-terminal domain maps to 112-232 (YPEDSAKREF…KTDSEYVVNY (121 aa)).

Belongs to the GST superfamily. Lambda family.

It localises to the cytoplasm. Its subcellular location is the cytosol. The enzyme catalyses RX + glutathione = an S-substituted glutathione + a halide anion + H(+). In terms of biological role, catalyzes the glutathione-dependent reduction of S-glutathionylquercetin to quercetin. In vitro, possesses glutathione-dependent thiol transferase activity toward 2-hydroxyethyl disulfide (HED). This Arabidopsis thaliana (Mouse-ear cress) protein is Glutathione S-transferase L1 (GSTL1).